The primary structure comprises 92 residues: Small ribosomal subunit protein uS19 (92 aa).

The protein belongs to the universal ribosomal protein uS19 family.

In terms of biological role, protein S19 forms a complex with S13 that binds strongly to the 16S ribosomal RNA. The protein is Small ribosomal subunit protein uS19 of Baumannia cicadellinicola subsp. Homalodisca coagulata.